The chain runs to 370 residues: Aminomethyltransferase (370 aa).

This sequence belongs to the GcvT family. The glycine cleavage system is composed of four proteins: P, T, L and H.

The enzyme catalyses N(6)-[(R)-S(8)-aminomethyldihydrolipoyl]-L-lysyl-[protein] + (6S)-5,6,7,8-tetrahydrofolate = N(6)-[(R)-dihydrolipoyl]-L-lysyl-[protein] + (6R)-5,10-methylene-5,6,7,8-tetrahydrofolate + NH4(+). In terms of biological role, the glycine cleavage system catalyzes the degradation of glycine. The sequence is that of Aminomethyltransferase from Stenotrophomonas maltophilia (strain K279a).